A 510-amino-acid chain; its full sequence is ATP synthase subunit alpha 1 (510 aa).

Position 169-176 (169-176 (GDRQTGKT)) interacts with ATP.

Belongs to the ATPase alpha/beta chains family. In terms of assembly, F-type ATPases have 2 components, CF(1) - the catalytic core - and CF(0) - the membrane proton channel. CF(1) has five subunits: alpha(3), beta(3), gamma(1), delta(1), epsilon(1). CF(0) has three main subunits: a(1), b(2) and c(9-12). The alpha and beta chains form an alternating ring which encloses part of the gamma chain. CF(1) is attached to CF(0) by a central stalk formed by the gamma and epsilon chains, while a peripheral stalk is formed by the delta and b chains.

Its subcellular location is the cell inner membrane. It catalyses the reaction ATP + H2O + 4 H(+)(in) = ADP + phosphate + 5 H(+)(out). In terms of biological role, produces ATP from ADP in the presence of a proton gradient across the membrane. The alpha chain is a regulatory subunit. This chain is ATP synthase subunit alpha 1, found in Marinomonas sp. (strain MWYL1).